The primary structure comprises 208 residues: Large ribosomal subunit protein uL4 (208 aa).

Residues 44 to 85 (RQGTKKTKTRAEVRGGGKKPWRQKGTGRARQGSIRAPHWRGG) are disordered. Over residues 59–70 (GGKKPWRQKGTG) the composition is skewed to basic residues.

It belongs to the universal ribosomal protein uL4 family. As to quaternary structure, part of the 50S ribosomal subunit.

Functionally, one of the primary rRNA binding proteins, this protein initially binds near the 5'-end of the 23S rRNA. It is important during the early stages of 50S assembly. It makes multiple contacts with different domains of the 23S rRNA in the assembled 50S subunit and ribosome. Forms part of the polypeptide exit tunnel. The polypeptide is Large ribosomal subunit protein uL4 (Mesoplasma florum (strain ATCC 33453 / NBRC 100688 / NCTC 11704 / L1) (Acholeplasma florum)).